A 197-amino-acid polypeptide reads, in one-letter code: Ubiquitin-conjugating enzyme E2 T (197 aa).

Positions 2–152 (QRASRLKREL…ARQWTEKHAR (151 aa)) constitute a UBC core domain. Cys86 serves as the catalytic Glycyl thioester intermediate. Glycyl lysine isopeptide (Lys-Gly) (interchain with G-Cter in ubiquitin) cross-links involve residues Lys91 and Lys182. Residues 149-197 (KHARQKQKADEEEMLDNLPEAGDSRVHNSTQKRKASQLVGIEKKFHPDV) are disordered. Ser184 carries the post-translational modification Phosphoserine. Glycyl lysine isopeptide (Lys-Gly) (interchain with G-Cter in SUMO2) cross-links involve residues Lys191 and Lys192.

The protein belongs to the ubiquitin-conjugating enzyme family. As to quaternary structure, directly interacts with FANCL. Interacts with BRCA1. Post-translationally, auto-ubiquitinated. Effects of auto-monoubiquitination at Lys-91 and Lys-182 are unclear: according to a report, monoubiquitination inactivates E2 enzyme activity. In contrast, according to another report, autoubiquitination does not affect E2 enzyme activity.

It localises to the nucleus. The catalysed reaction is S-ubiquitinyl-[E1 ubiquitin-activating enzyme]-L-cysteine + [E2 ubiquitin-conjugating enzyme]-L-cysteine = [E1 ubiquitin-activating enzyme]-L-cysteine + S-ubiquitinyl-[E2 ubiquitin-conjugating enzyme]-L-cysteine.. It functions in the pathway protein modification; protein ubiquitination. Its function is as follows. Accepts ubiquitin from the E1 complex and catalyzes its covalent attachment to other proteins. Catalyzes monoubiquitination. Involved in mitomycin-C (MMC)-induced DNA repair. Acts as a specific E2 ubiquitin-conjugating enzyme for the Fanconi anemia complex by associating with E3 ubiquitin-protein ligase FANCL and catalyzing monoubiquitination of FANCD2, a key step in the DNA damage pathway. Also mediates monoubiquitination of FANCL and FANCI. May contribute to ubiquitination and degradation of BRCA1. In vitro able to promote polyubiquitination using all 7 ubiquitin Lys residues, but may prefer 'Lys-11'-, 'Lys-27'-, 'Lys-48'- and 'Lys-63'-linked polyubiquitination. The protein is Ubiquitin-conjugating enzyme E2 T (UBE2T) of Homo sapiens (Human).